The sequence spans 405 residues: Aspartic protease (405 aa).

The N-terminal stretch at 1–21 (MISDTVIAILAVALVGSTVQA) is a signal peptide. The propeptide at 22–81 (APVDATATSTSGIIAVPISKSAAQLAREADPVVSLDWLKKTKAQAQYKHKQANARLHSKR) is removed in mature form. The Peptidase A1 domain maps to 97 to 402 (WTGPITIGGQ…DVGNARVGFA (306 aa)). The active site involves aspartate 113. Cysteine 126 and cysteine 131 are disulfide-bonded. Residue aspartate 290 is part of the active site. A disulfide bridge links cysteine 332 with cysteine 366.

Belongs to the peptidase A1 family.

Its subcellular location is the secreted. Its activity is regulated as follows. Inhibited by pepstatin A. Its function is as follows. Possesses acidic protease activity. Hydrolyzes casein and azoalbumin in vitro. This is Aspartic protease from Phaffia rhodozyma (Yeast).